Reading from the N-terminus, the 139-residue chain is Self-incompatibility protein S1 (139 aa).

The signal sequence occupies residues 1-19 (MNIFYVIVLLSFFLSKSSG). The N-linked (GlcNAc...) asparagine glycan is linked to N51.

Belongs to the plant self-incompatibility (S1) protein family. Glycosylated (S1b) and unglocosylated (S1a) forms coexist. In terms of tissue distribution, accumulates in the stigma (at protein level).

Its subcellular location is the secreted. Exhibits specific pollen self-inhibitory activity thus preventing self-fertilization. This chain is Self-incompatibility protein S1, found in Papaver rhoeas (Common poppy).